The following is a 115-amino-acid chain: MSGSKAKSRELARDVALQAIRTLYLAAVDAVRRGDYELARRLVAEADETRRVMRLRKPRFLRRGVCRNCSLPLVPGVTARYRLVRDGSVTRLVVTCLACGYIHRHVLVQRRRGSR.

Residues Cys66, Cys69, Cys96, and Cys99 each coordinate Zn(2+).

This sequence belongs to the eukaryotic/archaeal RNase P protein component 4 family. Consists of a catalytic RNA component and at least 4-5 protein subunits. Zn(2+) is required as a cofactor.

The protein localises to the cytoplasm. It catalyses the reaction Endonucleolytic cleavage of RNA, removing 5'-extranucleotides from tRNA precursor.. Functionally, part of ribonuclease P, a protein complex that generates mature tRNA molecules by cleaving their 5'-ends. This is Ribonuclease P protein component 4 from Hyperthermus butylicus (strain DSM 5456 / JCM 9403 / PLM1-5).